Reading from the N-terminus, the 199-residue chain is GTP cyclohydrolase-2 (199 aa).

Position 49–53 (49–53 (RIHSE)) interacts with GTP. Zn(2+)-binding residues include Cys-54, Cys-65, and Cys-67. GTP-binding positions include Gln-70, 92–94 (EGR), and Thr-114. Asp-126 (proton acceptor) is an active-site residue. The active-site Nucleophile is the Arg-128. Residues Thr-149 and Lys-154 each contribute to the GTP site.

Belongs to the GTP cyclohydrolase II family. In terms of assembly, homodimer. Zn(2+) serves as cofactor.

It carries out the reaction GTP + 4 H2O = 2,5-diamino-6-hydroxy-4-(5-phosphoribosylamino)-pyrimidine + formate + 2 phosphate + 3 H(+). It functions in the pathway cofactor biosynthesis; riboflavin biosynthesis; 5-amino-6-(D-ribitylamino)uracil from GTP: step 1/4. Catalyzes the conversion of GTP to 2,5-diamino-6-ribosylamino-4(3H)-pyrimidinone 5'-phosphate (DARP), formate and pyrophosphate. The polypeptide is GTP cyclohydrolase-2 (Proteus mirabilis (strain HI4320)).